A 1074-amino-acid polypeptide reads, in one-letter code: Telomerase reverse transcriptase (1074 aa).

Positions 240 to 265 are disordered; sequence DKVSCETMQDGESGKTTLVQKQPGSK. Residues 253–262 are compositionally biased toward polar residues; that stretch reads GKTTLVQKQP. Residues 300–305 carry the TFLY; involved in RNA binding motif; it reads TLGFLY. Interaction with RNA template regions lie at residues 355–360 and 461–486; these read LPRRFF and WKIK…ELSY. The 326-residue stretch at 552 to 877 folds into the Reverse transcriptase domain; the sequence is TPDQVAALPK…CLFPWCGLLL (326 aa). The Mg(2+) site is built by aspartate 649, aspartate 810, and aspartate 811.

This sequence belongs to the reverse transcriptase family. Telomerase subfamily. Catalytic subunit of the telomerase holoenzyme complex composed minimally of TERT and the telomerase RNA template component (TERC). Detected at highest levels in gill, ovary and testis, and at lower levels in brain, eye, heart, skin, spleen and stomach.

The protein localises to the nucleus. It localises to the chromosome. The protein resides in the telomere. It carries out the reaction DNA(n) + a 2'-deoxyribonucleoside 5'-triphosphate = DNA(n+1) + diphosphate. In terms of biological role, telomerase is a ribonucleoprotein enzyme essential for the replication of chromosome termini in most eukaryotes. It elongates telomeres. It is a reverse transcriptase that adds simple sequence repeats to chromosome ends by copying a template sequence within the RNA component of the enzyme. The chain is Telomerase reverse transcriptase from Takifugu rubripes (Japanese pufferfish).